A 39-amino-acid polypeptide reads, in one-letter code: uncharacterized protein (39 aa).

The first 21 residues, 1-21 (MHLRSRWWLALLYCKDPVSRS), serve as a signal peptide directing secretion.

This is an uncharacterized protein from Saccharomyces cerevisiae (strain ATCC 204508 / S288c) (Baker's yeast).